The primary structure comprises 142 residues: Baculoviral IAP repeat-containing protein 5 (142 aa).

A BIR repeat occupies 18–88 (RVSTFKNWPF…KHSSGCAFLS (71 aa)). A Phosphoserine; by AURKC modification is found at Ser20. The residue at position 23 (Lys23) is an N6-acetyllysine. Thr34 carries the post-translational modification Phosphothreonine; by CDK1 and CDK15. Phosphothreonine is present on Thr48. Residues Cys57, Cys60, His77, and Cys84 each contribute to the Zn(2+) site. An N6-acetyllysine mark is found at Lys90, Lys110, Lys112, and Lys115. Thr117 carries the phosphothreonine; by AURKB modification. Lys129 is modified (N6-acetyllysine).

The protein belongs to the IAP family. Monomer or homodimer. Exists as a homodimer in the apo state and as a monomer in the CPC-bound state. The monomer protects cells against apoptosis more efficiently than the dimer. Only the dimeric form is capable of enhancing tubulin stability in cells. When phosphorylated, interacts with LAMTOR5/HBXIP; the resulting complex binds pro-CASP9, as well as active CASP9, but much less efficiently. Component of the chromosomal passenger complex (CPC) composed of at least BIRC5/survivin, CDCA8/borealin, INCENP, AURKB or AURKC; in the complex forms a triple-helix bundle-based subcomplex with INCENP and CDCA8. Interacts with JTB. Interacts (via BIR domain) with histone H3 phosphorylated at 'Thr-3' (H3pT3). Interacts with EVI5. Interacts with GTP-bound RAN in both the S and M phases of the cell cycle. Interacts with USP9X. Interacts with tubulin. Interacts with BIRC2/c-IAP1. The acetylated form at Lys-129 interacts with STAT3. The monomeric form deacetylated at Lys-129 interacts with XPO1/CRM1. The monomeric form interacts with XIAP/BIRC4. Both the dimeric and monomeric form can interact with DIABLO/SMAC. Interacts with BIRC6/bruce. Interacts with FBXL7; this interaction facilitates the polyubiquitination and subsequent proteasomal degradation of BIRC5 by the SCF(FBXL7) E3 ubiquitin-protein ligase complex. In terms of processing, ubiquitinated by the Cul9-RING ubiquitin-protein ligase complex, leading to its degradation. Ubiquitination is required for centrosomal targeting. Deubiquitinated by USP35 or USP38; leading to stabilization. Post-translationally, acetylation at Lys-129 results in its homodimerization, while deacetylation promotes the formation of monomers which heterodimerize with XPO1/CRM1 which facilitates its nuclear export. The acetylated form represses STAT3 transactivation. The dynamic equilibrium between its acetylation and deacetylation at Lys-129 determines its interaction with XPO1/CRM1, its subsequent subcellular localization, and its ability to inhibit STAT3 transactivation. In vitro phosphorylation at Thr-117 by AURKB prevents interaction with INCENP and localization to mitotic chromosomes. Phosphorylation at Thr-48 by CK2 is critical for its mitotic and anti-apoptotic activities. Phosphorylation at Thr-34 by CDK15 is critical for its anti-apoptotic activity. Phosphorylation at Ser-20 by AURKC is critical for regulation of proper chromosome alignment and segregation, and possibly cytokinesis.

The protein resides in the cytoplasm. Its subcellular location is the nucleus. It localises to the chromosome. It is found in the centromere. The protein localises to the cytoskeleton. The protein resides in the spindle. Its subcellular location is the kinetochore. It localises to the midbody. In terms of biological role, multitasking protein that has dual roles in promoting cell proliferation and preventing apoptosis. Component of a chromosome passage protein complex (CPC) which is essential for chromosome alignment and segregation during mitosis and cytokinesis. Acts as an important regulator of the localization of this complex; directs CPC movement to different locations from the inner centromere during prometaphase to midbody during cytokinesis and participates in the organization of the center spindle by associating with polymerized microtubules. Involved in the recruitment of CPC to centromeres during early mitosis via association with histone H3 phosphorylated at 'Thr-3' (H3pT3) during mitosis. The complex with RAN plays a role in mitotic spindle formation by serving as a physical scaffold to help deliver the RAN effector molecule TPX2 to microtubules. May counteract a default induction of apoptosis in G2/M phase. The acetylated form represses STAT3 transactivation of target gene promoters. May play a role in neoplasia. Inhibitor of CASP3 and CASP7. Essential for the maintenance of mitochondrial integrity and function. The chain is Baculoviral IAP repeat-containing protein 5 (BIRC5) from Canis lupus familiaris (Dog).